The sequence spans 263 residues: Isoprenyl transferase (263 aa).

The active site involves Asp-38. A Mg(2+)-binding site is contributed by Asp-38. Substrate is bound by residues Gly-39–Arg-42, His-55, and Ser-83–Asp-85. Residue Asn-86 is the Proton acceptor of the active site. Substrate is bound by residues Phe-87, Arg-89, Arg-212, and Arg-218 to Ser-220. Glu-231 contributes to the Mg(2+) binding site.

It belongs to the UPP synthase family. In terms of assembly, homodimer. Mg(2+) is required as a cofactor.

Functionally, catalyzes the condensation of isopentenyl diphosphate (IPP) with allylic pyrophosphates generating different type of terpenoids. In Thermus thermophilus (strain ATCC 27634 / DSM 579 / HB8), this protein is Isoprenyl transferase.